Here is a 164-residue protein sequence, read N- to C-terminus: Protein 4 (164 aa).

In Lettuce big-vein associated virus (isolate Japan/Kagawa) (LBVaV), this protein is Protein 4.